The chain runs to 472 residues: UDP-glycosyltransferase 100 (472 aa).

His15 (proton acceptor) is an active-site residue. Residue His15 participates in an anthocyanidin binding. Residue Asp117 is the Charge relay of the active site. Residues Ala344, Gln346, His361, Trp364, Asn365, Ser366, and Glu369 each coordinate UDP-alpha-D-glucose. Gly384 lines the an anthocyanidin pocket. UDP-alpha-D-glucose is bound by residues Glu385 and Gln386.

The protein belongs to the UDP-glycosyltransferase family.

The enzyme catalyses (20S)-protopanaxadiol + UDP-alpha-D-glucose = (20S)-ginsenoside C-K + UDP + H(+). The catalysed reaction is (20S)-protopanaxatriol + UDP-alpha-D-glucose = (20S)-ginsenoside Rh1 + UDP + H(+). It catalyses the reaction (20S)-ginsenoside F1 + UDP-alpha-D-glucose = (20S)-ginsenoside Rg1 + UDP + H(+). It participates in secondary metabolite biosynthesis; terpenoid biosynthesis. Its function is as follows. Component of the dammarane-type triterpene saponins (e.g. PPT-type ginsenosides or panaxosides) biosynthetic pathway. Glycosyltransferase that catalyzes the biosynthesis of ginsenoside Rh1 from protopanaxatriol (PPT) and the conversion of ginsenoside F1 to ginsenoside Rg1. This Panax ginseng (Korean ginseng) protein is UDP-glycosyltransferase 100.